Here is a 278-residue protein sequence, read N- to C-terminus: 4-deoxy-L-threo-5-hexosulose-uronate ketol-isomerase (278 aa).

Residues histidine 196, histidine 198, glutamate 203, and histidine 245 each coordinate Zn(2+).

The protein belongs to the KduI family. Homohexamer. It depends on Zn(2+) as a cofactor.

The catalysed reaction is 5-dehydro-4-deoxy-D-glucuronate = 3-deoxy-D-glycero-2,5-hexodiulosonate. Its pathway is glycan metabolism; pectin degradation; 2-dehydro-3-deoxy-D-gluconate from pectin: step 4/5. Catalyzes the isomerization of 5-dehydro-4-deoxy-D-glucuronate to 3-deoxy-D-glycero-2,5-hexodiulosonate. This chain is 4-deoxy-L-threo-5-hexosulose-uronate ketol-isomerase, found in Escherichia coli (strain UTI89 / UPEC).